A 622-amino-acid chain; its full sequence is Polygalacturonase 1 beta-like protein 1 (622 aa).

The first 21 residues, 1 to 21, serve as a signal peptide directing secretion; sequence MRKQFVFLLPFLSRLYHVVIA. One copy of the FXXY 1 repeat lies at 118–121; the sequence is FSVY. Residue N125 is glycosylated (N-linked (GlcNAc...) asparagine). FXXY repeat units follow at residues 126 to 129, 140 to 143, 154 to 157, 168 to 171, 182 to 185, 196 to 199, 210 to 213, 224 to 227, 239 to 242, 253 to 256, and 267 to 270; these read FTNY, FKKY, FRRY, FTGY, FNSY, FKNY, FKAY, FKTY, FTSY, FSSY, and FSNY. N278 carries N-linked (GlcNAc...) asparagine glycosylation. 7 FXXY repeats span residues 281-284, 295-298, 309-312, 323-326, 337-340, 351-354, and 365-368; these read FKGY, FKSY, FLNY, FSSY, FVNY, FSGY, and FKTY. N-linked (GlcNAc...) asparagine glycosylation is present at N371. FXXY repeat units lie at residues 374–377 and 384–387; these read FKDY and FAKY. N388 and N461 each carry an N-linked (GlcNAc...) asparagine glycan. A BURP domain is found at 407 to 621; that stretch reads FFRESMLKEG…FENDMNWAIA (215 aa).

As to expression, expressed in flowers and stems.

Its subcellular location is the secreted. It is found in the extracellular space. The protein resides in the apoplast. It localises to the cell wall. Functionally, involved in cell size determination. The chain is Polygalacturonase 1 beta-like protein 1 from Arabidopsis thaliana (Mouse-ear cress).